The following is a 524-amino-acid chain: tRNA-2-methylthio-N(6)-dimethylallyladenosine synthase (524 aa).

Residues 1–12 show a composition bias toward basic and acidic residues; that stretch reads MNTHPSHPDHPA. Residues 1 to 23 are disordered; it reads MNTHPSHPDHPADTLPARGNREG. One can recognise an MTTase N-terminal domain in the interval 27–143; sequence RTYEVRTFGC…LPTLLNRAEH (117 aa). Residues Cys36, Cys72, Cys106, Cys180, Cys184, and Cys187 each coordinate [4Fe-4S] cluster. The region spanning 166-402 is the Radical SAM core domain; the sequence is RESAYAGWVS…MALQERICEE (237 aa). Residues 405 to 476 form the TRAM domain; sequence QKFIGQTVEL…PFFLIADAGV (72 aa).

It belongs to the methylthiotransferase family. MiaB subfamily. Monomer. [4Fe-4S] cluster is required as a cofactor.

It is found in the cytoplasm. It carries out the reaction N(6)-dimethylallyladenosine(37) in tRNA + (sulfur carrier)-SH + AH2 + 2 S-adenosyl-L-methionine = 2-methylsulfanyl-N(6)-dimethylallyladenosine(37) in tRNA + (sulfur carrier)-H + 5'-deoxyadenosine + L-methionine + A + S-adenosyl-L-homocysteine + 2 H(+). In terms of biological role, catalyzes the methylthiolation of N6-(dimethylallyl)adenosine (i(6)A), leading to the formation of 2-methylthio-N6-(dimethylallyl)adenosine (ms(2)i(6)A) at position 37 in tRNAs that read codons beginning with uridine. This chain is tRNA-2-methylthio-N(6)-dimethylallyladenosine synthase, found in Corynebacterium efficiens (strain DSM 44549 / YS-314 / AJ 12310 / JCM 11189 / NBRC 100395).